We begin with the raw amino-acid sequence, 22 residues long: Caerin-3.4 (22 aa).

Lys-22 carries the lysine amide modification.

In terms of tissue distribution, expressed by the skin parotoid and/or rostral glands.

It is found in the secreted. In terms of biological role, antibacterial peptide, that adopts an alpha helical conformation which can disrupt bacterial membranes. Each caerin displays a different antimicrobial specificity. This Ranoidea caerulea (Green tree frog) protein is Caerin-3.4.